Reading from the N-terminus, the 641-residue chain is YAP1-binding protein 2 (641 aa).

This sequence belongs to the YBP1 family.

It is found in the cytoplasm. Its function is as follows. Involved in oxidative stress response and redox homeostasis. Required for hydrogen peroxide-induced activation of YAP1. Acts in a parallele pathway to YBP1. This Saccharomyces cerevisiae (strain ATCC 204508 / S288c) (Baker's yeast) protein is YAP1-binding protein 2.